Here is a 104-residue protein sequence, read N- to C-terminus: Iron-sulfur cluster assembly protein CyaY (104 aa).

This sequence belongs to the frataxin family.

Involved in iron-sulfur (Fe-S) cluster assembly. May act as a regulator of Fe-S biogenesis. In Aeromonas hydrophila subsp. hydrophila (strain ATCC 7966 / DSM 30187 / BCRC 13018 / CCUG 14551 / JCM 1027 / KCTC 2358 / NCIMB 9240 / NCTC 8049), this protein is Iron-sulfur cluster assembly protein CyaY.